Consider the following 326-residue polypeptide: Photosystem II assembly factor Ycf39 (326 aa).

This sequence belongs to the NmrA-type oxidoreductase family. Ycf39 subfamily. Purified in several chlorophyll- and carotenoid-containing complexes, including photosystem II (PSII) assembly intermediate complex RCII* (iD1, D1, D2, PsbE, PsbF, PsbI, Ycf39, Ycf48, HliC and HliD) and the Ycf39-Hlip complex (Ycf39, HliC, HliD and pigments). Tagged protein does not pull down mature PSII.

It localises to the cellular thylakoid membrane. Functionally, requires HliD to bind pigments. The Ycf39-Hlip complex binds D1 at an early stage of PSII assembly along with Ycf48, ribosomes and ChlG, the last enzyme in chlorophyll biosynthesis; it may be involved in chlorophyll reuse and delivery to D1 in the initial stages of PSII assembly. The Ycf39-Hlip complex efficiently quenches chlorophyll fluorescence, contributing to photoprotection. The sequence is that of Photosystem II assembly factor Ycf39 from Synechocystis sp. (strain ATCC 27184 / PCC 6803 / Kazusa).